The sequence spans 260 residues: Ditrans,polycis-undecaprenyl-diphosphate synthase ((2E,6E)-farnesyl-diphosphate specific) (260 aa).

The active site involves Asp-20. A Mg(2+)-binding site is contributed by Asp-20. Substrate-binding positions include 21–24, Trp-25, Arg-33, His-37, and 65–67; these read GNGR and SSE. Catalysis depends on Asn-68, which acts as the Proton acceptor. Substrate-binding residues include Trp-69, Arg-71, and Arg-188. His-193 lines the Mg(2+) pocket. Residue 194–196 coordinates substrate; it reads RIS. Position 207 (Glu-207) interacts with Mg(2+).

It belongs to the UPP synthase family. As to quaternary structure, homodimer. The cofactor is Mg(2+).

The enzyme catalyses 8 isopentenyl diphosphate + (2E,6E)-farnesyl diphosphate = di-trans,octa-cis-undecaprenyl diphosphate + 8 diphosphate. Catalyzes the sequential condensation of isopentenyl diphosphate (IPP) with (2E,6E)-farnesyl diphosphate (E,E-FPP) to yield (2Z,6Z,10Z,14Z,18Z,22Z,26Z,30Z,34E,38E)-undecaprenyl diphosphate (di-trans,octa-cis-UPP). UPP is the precursor of glycosyl carrier lipid in the biosynthesis of bacterial cell wall polysaccharide components such as peptidoglycan and lipopolysaccharide. The polypeptide is Ditrans,polycis-undecaprenyl-diphosphate synthase ((2E,6E)-farnesyl-diphosphate specific) (Wigglesworthia glossinidia brevipalpis).